The following is a 206-amino-acid chain: Nucleoside triphosphate pyrophosphatase (206 aa).

The Proton acceptor role is filled by aspartate 71.

Belongs to the Maf family. Requires a divalent metal cation as cofactor.

Its subcellular location is the cytoplasm. The catalysed reaction is a ribonucleoside 5'-triphosphate + H2O = a ribonucleoside 5'-phosphate + diphosphate + H(+). It catalyses the reaction a 2'-deoxyribonucleoside 5'-triphosphate + H2O = a 2'-deoxyribonucleoside 5'-phosphate + diphosphate + H(+). Its function is as follows. Nucleoside triphosphate pyrophosphatase. May have a dual role in cell division arrest and in preventing the incorporation of modified nucleotides into cellular nucleic acids. The chain is Nucleoside triphosphate pyrophosphatase from Rippkaea orientalis (strain PCC 8801 / RF-1) (Cyanothece sp. (strain PCC 8801)).